The following is a 513-amino-acid chain: ATP synthase subunit alpha (513 aa).

169–176 (GDRQTGKT) provides a ligand contact to ATP.

Belongs to the ATPase alpha/beta chains family. As to quaternary structure, F-type ATPases have 2 components, CF(1) - the catalytic core - and CF(0) - the membrane proton channel. CF(1) has five subunits: alpha(3), beta(3), gamma(1), delta(1), epsilon(1). CF(0) has three main subunits: a(1), b(2) and c(9-12). The alpha and beta chains form an alternating ring which encloses part of the gamma chain. CF(1) is attached to CF(0) by a central stalk formed by the gamma and epsilon chains, while a peripheral stalk is formed by the delta and b chains.

The protein localises to the cell inner membrane. It carries out the reaction ATP + H2O + 4 H(+)(in) = ADP + phosphate + 5 H(+)(out). Produces ATP from ADP in the presence of a proton gradient across the membrane. The alpha chain is a regulatory subunit. The sequence is that of ATP synthase subunit alpha from Proteus mirabilis (strain HI4320).